Consider the following 267-residue polypeptide: MSCLVLPLVSVGNIPQLSIDWLLNSQANEWEYLEALDSKYLVEFVGPLDRPEDGSDSLYKDADMKYSSALEVFYNKKRGLFAIQQRTPLVSVNYLNNFIVEIILPFLSKYNISEICIWDSLYAMEDENGVIVRPQEVYSLGEFYFDDEAELLSNLHLNDQESMVNNWLHFTPTSFQDKISVDQPIFKILFQILNASQRPKALRSIKYCSCLANEGDNSLDSQQFLQWIISQKVIKNAPPIVKFVRPISWQGAYGMADARDKFVDLYN.

Belongs to the PSMG2 family. In terms of assembly, component of the 20S proteasome chaperone. Forms a heterodimer with PBA1 that binds to proteasome precursors.

The protein localises to the cytoplasm. Functionally, involved in 20S proteasome assembly. Required for maximal proteasome activity. Affects the chymotrypsin-like activity of the proteasome. Can be degraded by the proteasome. Involved in the endoplasmic reticulum-associated degradation (ERAD). This Saccharomyces cerevisiae (strain ATCC 204508 / S288c) (Baker's yeast) protein is Proteasome assembly chaperone 2 (ADD66).